The sequence spans 205 residues: High frequency lysogenization protein HflD homolog (205 aa).

Belongs to the HflD family.

It is found in the cytoplasm. The protein localises to the cell inner membrane. The sequence is that of High frequency lysogenization protein HflD homolog from Shewanella sp. (strain W3-18-1).